The following is a 778-amino-acid chain: Endonuclease MutS2 (778 aa).

Gly328 to Thr335 is an ATP binding site. A Smr domain is found at Leu702–Lys777.

It belongs to the DNA mismatch repair MutS family. MutS2 subfamily. Homodimer. Binds to stalled ribosomes, contacting rRNA.

Functionally, endonuclease that is involved in the suppression of homologous recombination and thus may have a key role in the control of bacterial genetic diversity. Its function is as follows. Acts as a ribosome collision sensor, splitting the ribosome into its 2 subunits. Detects stalled/collided 70S ribosomes which it binds and splits by an ATP-hydrolysis driven conformational change. Acts upstream of the ribosome quality control system (RQC), a ribosome-associated complex that mediates the extraction of incompletely synthesized nascent chains from stalled ribosomes and their subsequent degradation. Probably generates substrates for RQC. This chain is Endonuclease MutS2, found in Streptococcus pneumoniae serotype 2 (strain D39 / NCTC 7466).